We begin with the raw amino-acid sequence, 117 residues long: Large ribosomal subunit protein bL19 (117 aa).

This sequence belongs to the bacterial ribosomal protein bL19 family.

Its function is as follows. This protein is located at the 30S-50S ribosomal subunit interface and may play a role in the structure and function of the aminoacyl-tRNA binding site. This chain is Large ribosomal subunit protein bL19, found in Shewanella piezotolerans (strain WP3 / JCM 13877).